The primary structure comprises 128 residues: MAYRKLGRTSSQRKAMLRDLTTDLLINESIVTTEARAKEIRKTVEKMITLGKRGDLHARRQAAAFVRNEIASENYDEATDKYTSTTALQKLFSEIAPRYAERNGGYTRILKTEPRRGDAAPMAIIELV.

It belongs to the bacterial ribosomal protein bL17 family. As to quaternary structure, part of the 50S ribosomal subunit. Contacts protein L32.

The chain is Large ribosomal subunit protein bL17 from Streptococcus pneumoniae serotype 2 (strain D39 / NCTC 7466).